A 122-amino-acid chain; its full sequence is Large ribosomal subunit protein uL14 (122 aa).

It belongs to the universal ribosomal protein uL14 family. In terms of assembly, part of the 50S ribosomal subunit. Forms a cluster with proteins L3 and L19. In the 70S ribosome, L14 and L19 interact and together make contacts with the 16S rRNA in bridges B5 and B8.

Its function is as follows. Binds to 23S rRNA. Forms part of two intersubunit bridges in the 70S ribosome. The protein is Large ribosomal subunit protein uL14 of Hydrogenovibrio crunogenus (strain DSM 25203 / XCL-2) (Thiomicrospira crunogena).